The sequence spans 154 residues: Fimbrial protein (154 aa).

Residues 1–6 (MKAQKG) constitute a propeptide, leader sequence. Phenylalanine 7 bears the N-methylphenylalanine mark. A helical membrane pass occupies residues 7 to 27 (FTLIELMIVVAIIGILAAIAI). Residues cysteine 133 and cysteine 151 are joined by a disulfide bond. Serine 154 carries an O-linked (FucNAc...) serine glycan.

This sequence belongs to the N-Me-Phe pilin family. In terms of assembly, the pili are polar flexible filaments of about 5.4 nanometers diameter and 2.5 micrometers average length; they consist of only a single polypeptide chain arranged in a helical configuration of five subunits per turn in the assembled pilus. O-glycosylated; glycan consists of 5NbetaOHC47NFmPse(alpha2-4)Xyl(beta1-3)FucNAc in beta1-O linkage to Ser.

It is found in the fimbrium. It localises to the membrane. The protein is Fimbrial protein (pilA) of Pseudomonas aeruginosa.